Consider the following 682-residue polypeptide: Potassium-transporting ATPase ATP-binding subunit (682 aa).

4 helical membrane passes run proline 34 to valine 54, isoleucine 58 to phenylalanine 78, isoleucine 219 to leucine 239, and valine 254 to isoleucine 274. Aspartate 307 acts as the 4-aspartylphosphate intermediate in catalysis. Residues aspartate 344, glutamate 348, phenylalanine 377 to serine 384, and lysine 395 each bind ATP. Mg(2+)-binding residues include aspartate 518 and aspartate 522. Transmembrane regions (helical) follow at residues phenylalanine 588 to methionine 608, alanine 616 to leucine 636, and leucine 662 to alanine 682.

This sequence belongs to the cation transport ATPase (P-type) (TC 3.A.3) family. Type IA subfamily. In terms of assembly, the system is composed of three essential subunits: KdpA, KdpB and KdpC.

The protein localises to the cell inner membrane. The catalysed reaction is K(+)(out) + ATP + H2O = K(+)(in) + ADP + phosphate + H(+). In terms of biological role, part of the high-affinity ATP-driven potassium transport (or Kdp) system, which catalyzes the hydrolysis of ATP coupled with the electrogenic transport of potassium into the cytoplasm. This subunit is responsible for energy coupling to the transport system and for the release of the potassium ions to the cytoplasm. The protein is Potassium-transporting ATPase ATP-binding subunit of Salmonella typhimurium (strain LT2 / SGSC1412 / ATCC 700720).